We begin with the raw amino-acid sequence, 699 residues long: Endogenous retrovirus group K member 8 Env polyprotein (699 aa).

A disordered region spans residues 1–47 (MNPSEMQRKAPPRRRRHRNRAPLTHKMNKMVTSEEQMKLPSTKKAEP). The signal sequence occupies residues 1–89 (MNPSEMQRKA…ALMIVSMVVS (89 aa)). Residues 10–20 (APPRRRRHRNR) show a composition bias toward basic residues. Topologically, residues 90-632 (LPMPAGAAVA…NLNPVTWVKT (543 aa)) are extracellular. N100, N128, N153, N274, N355, N372, and N461 each carry an N-linked (GlcNAc...) asparagine glycan. A fusion peptide region spans residues 466–486 (FIFTLIAVIMGLIAVTATAAV). Residues N507, N554, N566, and N585 are each glycosylated (N-linked (GlcNAc...) asparagine). The helical transmembrane segment at 633–653 (IGSTTIINLILILVCLFCLLL) threads the bilayer. The Cytoplasmic segment spans residues 654–699 (VCRCTQQLRRDSDHRERAMMTMAVLSKRKGGNVGKSKRDQIVTVSV).

Belongs to the beta type-B retroviral envelope protein family. HERV class-II K(HML-2) env subfamily. As to quaternary structure, the surface (SU) and transmembrane (TM) proteins form a heterodimer. SU and TM are attached by noncovalent interactions or by a labile interchain disulfide bond. In terms of processing, specific enzymatic cleavages in vivo yield the mature SU and TM proteins.

Its subcellular location is the cell membrane. The protein localises to the virion. In terms of biological role, retroviral envelope proteins mediate receptor recognition and membrane fusion during early infection. Endogenous envelope proteins may have kept, lost or modified their original function during evolution. This endogenous envelope protein has lost its original fusogenic properties. Its function is as follows. SU mediates receptor recognition. Functionally, TM anchors the envelope heterodimer to the viral membrane through one transmembrane domain. The other hydrophobic domain, called fusion peptide, mediates fusion of the viral membrane with the target cell membrane. This Homo sapiens (Human) protein is Endogenous retrovirus group K member 8 Env polyprotein (ERVK-8).